Reading from the N-terminus, the 290-residue chain is MDYKHFKGKHANIVIEIISLLEKGVKKAQEILEKPDAGSYTKLENSSGDTPIKADLALDKFLEENFLSLENIKSVFSEEKETPVTKENGSYLIAYDPLDGSSVMEANFLVGTIIGIYEKDYKAQNLVASLYVVFGHKIELMVALEEVYRYAFYQNKFHFIETIVLENKGKIVASGGNQKDFSLGLKKALEGFFAENYRLRYSGSMVADVHHVLIKKGGMFSYPQKKLRKLFEVFPLALIIEKAKGEAFYFDKGVKKRLLEQSVESYHEKSECYLASPHEAQILEKHLKGE.

Mg(2+)-binding residues include Glu-78, Asp-96, Leu-98, and Asp-99. Substrate is bound by residues 99 to 102 (DGSS), Tyr-201, and Lys-226. Glu-232 lines the Mg(2+) pocket.

Belongs to the FBPase class 1 family. Homotetramer. The cofactor is Mg(2+).

The protein resides in the cytoplasm. The enzyme catalyses beta-D-fructose 1,6-bisphosphate + H2O = beta-D-fructose 6-phosphate + phosphate. It functions in the pathway carbohydrate biosynthesis; gluconeogenesis. This chain is Fructose-1,6-bisphosphatase class 1, found in Helicobacter pylori (strain HPAG1).